Consider the following 330-residue polypeptide: Tetraacyldisaccharide 4'-kinase (330 aa).

58–65 (TVGGSGKT) provides a ligand contact to ATP.

It belongs to the LpxK family.

It carries out the reaction a lipid A disaccharide + ATP = a lipid IVA + ADP + H(+). It participates in glycolipid biosynthesis; lipid IV(A) biosynthesis; lipid IV(A) from (3R)-3-hydroxytetradecanoyl-[acyl-carrier-protein] and UDP-N-acetyl-alpha-D-glucosamine: step 6/6. In terms of biological role, transfers the gamma-phosphate of ATP to the 4'-position of a tetraacyldisaccharide 1-phosphate intermediate (termed DS-1-P) to form tetraacyldisaccharide 1,4'-bis-phosphate (lipid IVA). The protein is Tetraacyldisaccharide 4'-kinase of Shewanella pealeana (strain ATCC 700345 / ANG-SQ1).